A 546-amino-acid polypeptide reads, in one-letter code: 2-succinyl-5-enolpyruvyl-6-hydroxy-3-cyclohexene-1-carboxylate synthase (546 aa).

The protein belongs to the TPP enzyme family. MenD subfamily. In terms of assembly, homodimer. It depends on Mg(2+) as a cofactor. The cofactor is Mn(2+). Thiamine diphosphate serves as cofactor.

The catalysed reaction is isochorismate + 2-oxoglutarate + H(+) = 5-enolpyruvoyl-6-hydroxy-2-succinyl-cyclohex-3-ene-1-carboxylate + CO2. It participates in quinol/quinone metabolism; 1,4-dihydroxy-2-naphthoate biosynthesis; 1,4-dihydroxy-2-naphthoate from chorismate: step 2/7. The protein operates within quinol/quinone metabolism; menaquinone biosynthesis. Functionally, catalyzes the thiamine diphosphate-dependent decarboxylation of 2-oxoglutarate and the subsequent addition of the resulting succinic semialdehyde-thiamine pyrophosphate anion to isochorismate to yield 2-succinyl-5-enolpyruvyl-6-hydroxy-3-cyclohexene-1-carboxylate (SEPHCHC). The protein is 2-succinyl-5-enolpyruvyl-6-hydroxy-3-cyclohexene-1-carboxylate synthase of Mycolicibacterium smegmatis (strain ATCC 700084 / mc(2)155) (Mycobacterium smegmatis).